Reading from the N-terminus, the 158-residue chain is Sporulation-delaying protein SdpA (158 aa).

Its subcellular location is the cytoplasm. Required for the maturation of SdpC to SDP. Not required for SdpC signal peptide cleavage, secretion from the cell or disulfide bond formation. The chain is Sporulation-delaying protein SdpA from Bacillus subtilis (strain 168).